The following is a 432-amino-acid chain: Tol-Pal system protein TolB (432 aa).

A signal peptide spans 1–22; it reads MMFKKCLSVLFTCLIFISSARA.

Belongs to the TolB family. In terms of assembly, the Tol-Pal system is composed of five core proteins: the inner membrane proteins TolA, TolQ and TolR, the periplasmic protein TolB and the outer membrane protein Pal. They form a network linking the inner and outer membranes and the peptidoglycan layer.

It localises to the periplasm. In terms of biological role, part of the Tol-Pal system, which plays a role in outer membrane invagination during cell division and is important for maintaining outer membrane integrity. This Marinomonas sp. (strain MWYL1) protein is Tol-Pal system protein TolB.